We begin with the raw amino-acid sequence, 128 residues long: Large ribosomal subunit protein uL22 (128 aa).

The protein belongs to the universal ribosomal protein uL22 family. In terms of assembly, part of the 50S ribosomal subunit.

This protein binds specifically to 23S rRNA; its binding is stimulated by other ribosomal proteins, e.g. L4, L17, and L20. It is important during the early stages of 50S assembly. It makes multiple contacts with different domains of the 23S rRNA in the assembled 50S subunit and ribosome. Functionally, the globular domain of the protein is located near the polypeptide exit tunnel on the outside of the subunit, while an extended beta-hairpin is found that lines the wall of the exit tunnel in the center of the 70S ribosome. This Nitrobacter hamburgensis (strain DSM 10229 / NCIMB 13809 / X14) protein is Large ribosomal subunit protein uL22.